The chain runs to 417 residues: Guanine nucleotide-exchange factor SEC12 (417 aa).

Topologically, residues 1-388 are cytoplasmic; that stretch reads MGRRRGVELY…QLHLLPSRRS (388 aa). Tyr-10 carries the 3'-nitrotyrosine modification. The interval 101 to 135 is disordered; the sequence is KGSKAEKSGSKEQGPRQRKGAPPAEKKSGAQVHPE. Basic and acidic residues predominate over residues 103–115; the sequence is SKAEKSGSKEQGP. WD repeat units lie at residues 152-191, 194-232, and 298-337; these read SNEP…KVLE, AHEG…TQLQ, and CGHE…RLYY. A helical transmembrane segment spans residues 389–409; sequence VPVWLLLLLCVGLIIVTILLL. Residues 410–417 lie on the Lumenal side of the membrane; it reads QTAFPGFL.

As to quaternary structure, interacts with SAR1B (GDP-bound form). Interacts with MIA2; recruits PREB to endoplasmic reticulum exit sites. Interacts with CIDEB; facilitating loading of SCAP-SREBP into COPII vesicles.

The protein resides in the endoplasmic reticulum membrane. It is found in the nucleus. Guanine nucleotide exchange factor (GEF) that regulates the assembly of the coat protein complex II/COPII in endoplasmic reticulum (ER) to Golgi vesicle-mediated transport. Selectively activates SAR1A and SAR1B by promoting the exchange of guanosine diphosphate (GDP) for guanosine triphosphate (GTP) in these small GTPases. In their activated GTP-bound state, SAR1A and SAR1B insert into the membrane of the endoplasmic reticulum where they recruit the remainder of the coat protein complex II/COPII which is responsible for both the sorting of proteins and the deformation and budding of membranes into vesicles destined to the Golgi. In terms of biological role, was first identified based on its probable role in the regulation of pituitary gene transcription. Binds to the prolactin gene (PRL) promoter and seems to activate transcription. This Mus musculus (Mouse) protein is Guanine nucleotide-exchange factor SEC12.